The sequence spans 174 residues: UPF0340 protein SE_1711 (174 aa).

This sequence belongs to the UPF0340 family.

The chain is UPF0340 protein SE_1711 from Staphylococcus epidermidis (strain ATCC 12228 / FDA PCI 1200).